A 345-amino-acid chain; its full sequence is L-threonine 3-dehydrogenase (345 aa).

Cys42 is a Zn(2+) binding site. Residues Thr44 and His47 each act as charge relay system in the active site. Zn(2+) contacts are provided by His67, Glu68, Cys97, Cys100, Cys103, and Cys111. NAD(+) contacts are provided by residues Ile179, Asp199, Arg204, 266–268, and 290–291; these read LGI and IY.

Belongs to the zinc-containing alcohol dehydrogenase family. Homotetramer. The cofactor is Zn(2+).

Its subcellular location is the cytoplasm. It carries out the reaction L-threonine + NAD(+) = (2S)-2-amino-3-oxobutanoate + NADH + H(+). Its pathway is amino-acid degradation; L-threonine degradation via oxydo-reductase pathway; glycine from L-threonine: step 1/2. In terms of biological role, catalyzes the NAD(+)-dependent oxidation of L-threonine to 2-amino-3-ketobutyrate. The sequence is that of L-threonine 3-dehydrogenase from Rhizobium etli (strain ATCC 51251 / DSM 11541 / JCM 21823 / NBRC 15573 / CFN 42).